The primary structure comprises 853 residues: Protein translocase subunit SecA 1 (853 aa).

ATP contacts are provided by residues Gln85, 103–107, and Asp492; that span reads GEGKT.

The protein belongs to the SecA family. Monomer and homodimer. Part of the essential Sec protein translocation apparatus which comprises SecA, SecYEG and auxiliary proteins SecDF. Other proteins may also be involved.

The protein resides in the cell membrane. It is found in the cytoplasm. The catalysed reaction is ATP + H2O + cellular proteinSide 1 = ADP + phosphate + cellular proteinSide 2.. Part of the Sec protein translocase complex. Interacts with the SecYEG preprotein conducting channel. Has a central role in coupling the hydrolysis of ATP to the transfer of proteins into and across the cell membrane, serving as an ATP-driven molecular motor driving the stepwise translocation of polypeptide chains across the membrane. This Corynebacterium diphtheriae (strain ATCC 700971 / NCTC 13129 / Biotype gravis) protein is Protein translocase subunit SecA 1.